We begin with the raw amino-acid sequence, 1048 residues long: Putative cation efflux system protein SilA (1048 aa).

14 consecutive transmembrane segments (helical) span residues 14–34 (FLVM…IINT), 125–145 (VSSE…YALV), 338–358 (LSSK…LFLW), 363–383 (ALVA…VMHF), 391–411 (MSLG…IVMI), 446–466 (VGPA…PIFT), 485–505 (SMAG…GFWI), 539–559 (TLLV…QVGG), 737–757 (GMTV…AMVG), 871–891 (KLKL…YLAF), 897–917 (ALLI…FLYW), 928–948 (TGFI…LMYL), 985–1005 (AMTV…TGAG), and 1012–1032 (IAAP…FIIP).

The protein belongs to the resistance-nodulation-cell division (RND) (TC 2.A.6) family.

Its subcellular location is the cell inner membrane. Functionally, component of the sil cation-efflux system that confers resistance to silver. May be part of a three-component cation/proton antiporter. In Salmonella typhimurium, this protein is Putative cation efflux system protein SilA (silA).